A 189-amino-acid polypeptide reads, in one-letter code: Parkinson disease protein 7 homolog (189 aa).

Residues cysteine 46 and cysteine 53 are each lipidated (S-palmitoyl cysteine). Residue tyrosine 67 is modified to Phosphotyrosine. The S-palmitoyl cysteine moiety is linked to residue cysteine 106. Cysteine 106 acts as the Nucleophile in catalysis. Cysteine 106 is subject to Cysteine sulfinic acid (-SO2H). Cysteine 106 carries the cysteine sulfinic acid (-SO2H); alternate modification. Residue cysteine 106 is the site of S-palmitoyl cysteine; alternate attachment. Histidine 126 is an active-site residue. Residue lysine 130 forms a Glycyl lysine isopeptide (Lys-Gly) (interchain with G-Cter in SUMO) linkage. The residue at position 148 (lysine 148) is an N6-acetyllysine. Lysine 182 carries the post-translational modification N6-succinyllysine.

It belongs to the peptidase C56 family. Homodimer. Deglycase activity does not require glutathione as a cofactor, however, glycated glutathione constitutes a PARK7 substrate. is required as a cofactor. Sumoylated on Lys-130 by pias2 or pias4; which is essential for cell-growth promoting activity and transforming activity. Post-translationally, undergoes cleavage of a C-terminal peptide and subsequent activation of protease activity in response to oxidative stress. In terms of tissue distribution, larval brain and gut from 96 hours post-fertilization (hpf). Ubiquitous in adult; most abundant in brain, eye, heart and muscle. Within brain, neuronal expression is widespread, particularly in the cerebellum, medullary reticular formation and diencephalon. Expressed in major forebrain and diencephalic dopaminergic cell groups.

The protein resides in the cell membrane. It localises to the cytoplasm. Its subcellular location is the nucleus. The protein localises to the membrane raft. It is found in the mitochondrion. The protein resides in the endoplasmic reticulum. The catalysed reaction is N(omega)-(1-hydroxy-2-oxopropyl)-L-arginyl-[protein] + H2O = lactate + L-arginyl-[protein] + H(+). It carries out the reaction N(6)-(1-hydroxy-2-oxopropyl)-L-lysyl-[protein] + H2O = lactate + L-lysyl-[protein] + H(+). It catalyses the reaction S-(1-hydroxy-2-oxopropyl)-L-cysteinyl-[protein] + H2O = lactate + L-cysteinyl-[protein] + H(+). The enzyme catalyses N(omega)-(1-hydroxy-2-oxoethyl)-L-arginyl-[protein] + H2O = L-arginyl-[protein] + glycolate + H(+). The catalysed reaction is N(6)-(1-hydroxy-2-oxoethyl)-L-lysyl-[protein] + H2O = glycolate + L-lysyl-[protein] + H(+). It carries out the reaction S-(1-hydroxy-2-oxoethyl)-L-cysteinyl-[protein] + H2O = glycolate + L-cysteinyl-[protein] + H(+). It catalyses the reaction N(2)-(1-hydroxy-2-oxopropyl)-dGTP + H2O = lactate + dGTP + H(+). The enzyme catalyses N(2)-(1-hydroxy-2-oxopropyl)-GTP + H2O = lactate + GTP + H(+). The catalysed reaction is N(2)-(1-hydroxy-2-oxopropyl)-GDP + H2O = lactate + GDP + H(+). It carries out the reaction N(2)-(1-hydroxy-2-oxopropyl)-GMP + H2O = lactate + GMP + H(+). It catalyses the reaction N(2)-(1-hydroxy-2-oxoethyl)-dGTP + H2O = dGTP + glycolate + H(+). The enzyme catalyses N(2)-(1-hydroxy-2-oxoethyl)-GTP + H2O = glycolate + GTP + H(+). The catalysed reaction is N(2)-(1-hydroxy-2-oxoethyl)-GDP + H2O = glycolate + GDP + H(+). It carries out the reaction N(2)-(1-hydroxy-2-oxoethyl)-GMP + H2O = glycolate + GMP + H(+). It catalyses the reaction an N(2)-(1-hydroxy-2-oxopropyl)-guanosine in RNA + H2O = a guanosine in RNA + lactate + H(+). The enzyme catalyses an N(2)-(1-hydroxy-2-oxopropyl)-2'-deoxyguanosine in DNA + H2O = a 2'-deoxyguanosine in DNA + lactate + H(+). The catalysed reaction is an N(2)-(1-hydroxy-2-oxoethyl)-guanosine in RNA + H2O = a guanosine in RNA + glycolate + H(+). It carries out the reaction an N(2)-(1-hydroxy-2-oxoethyl)-2'-deoxyguanosine in DNA + H2O = a 2'-deoxyguanosine in DNA + glycolate + H(+). Functionally, multifunctional protein with controversial molecular function which plays an important role in cell protection against oxidative stress and cell death acting as oxidative stress sensor and redox-sensitive chaperone and protease. It is involved in neuroprotective mechanisms like the stabilization of NFE2L2 and PINK1 proteins, male fertility as a positive regulator of androgen signaling pathway as well as cell growth and transformation through, for instance, the modulation of NF-kappa-B signaling pathway. Has been described as a protein and nucleotide deglycase that catalyzes the deglycation of the Maillard adducts formed between amino groups of proteins or nucleotides and reactive carbonyl groups of glyoxals. But this function is rebuted by other works. As a protein deglycase, repairs methylglyoxal- and glyoxal-glycated proteins, and releases repaired proteins and lactate or glycolate, respectively. Deglycates cysteine, arginine and lysine residues in proteins, and thus reactivates these proteins by reversing glycation by glyoxals. Acts on early glycation intermediates (hemithioacetals and aminocarbinols), preventing the formation of advanced glycation endproducts (AGE) that cause irreversible damage. Also functions as a nucleotide deglycase able to repair glycated guanine in the free nucleotide pool (GTP, GDP, GMP, dGTP) and in DNA and RNA. Is thus involved in a major nucleotide repair system named guanine glycation repair (GG repair), dedicated to reversing methylglyoxal and glyoxal damage via nucleotide sanitization and direct nucleic acid repair. Protects histones from adduction by methylglyoxal, controls the levels of methylglyoxal-derived argininine modifications on chromatin. Displays a very low glyoxalase activity that may reflect its deglycase activity. It is involved in neuroprotective mechanisms as well as cell growth and transformation. Its involvement in protein repair could also explain other unrelated functions. Eliminates hydrogen peroxide and protects cells against hydrogen peroxide-induced cell death. Required for correct mitochondrial morphology and function as well as for autophagy of dysfunctional mitochondria. Regulates astrocyte inflammatory responses, may modulate lipid rafts-dependent endocytosis in astrocytes and neuronal cells. Binds to a number of mRNAs containing multiple copies of GG or CC motifs and partially inhibits their translation but dissociates following oxidative stress. Metal-binding protein able to bind copper as well as toxic mercury ions, enhances the cell protection mechanism against induced metal toxicity. The polypeptide is Parkinson disease protein 7 homolog (Danio rerio (Zebrafish)).